We begin with the raw amino-acid sequence, 507 residues long: Maturase K (507 aa).

The protein belongs to the intron maturase 2 family. MatK subfamily.

The protein localises to the plastid. It is found in the chloroplast. In terms of biological role, usually encoded in the trnK tRNA gene intron. Probably assists in splicing its own and other chloroplast group II introns. The chain is Maturase K from Buxus microphylla (Littleleaf boxwood).